A 77-amino-acid chain; its full sequence is U8-lycotoxin-Ls1a (77 aa).

The N-terminal stretch at 1-20 is a signal peptide; sequence MKLIIFTGLVLFAIVSLIEA. Residues 21–26 constitute a propeptide that is removed on maturation; the sequence is QAENEK.

This sequence belongs to the neurotoxin 19 (CSTX) family. 08 (U8-Lctx) subfamily. Contains 4 disulfide bonds. Expressed by the venom gland.

The protein resides in the secreted. The polypeptide is U8-lycotoxin-Ls1a (Lycosa singoriensis (Wolf spider)).